The chain runs to 971 residues: Polyamine-modulated factor 1-binding protein 1 (971 aa).

Coiled coils occupy residues 37–69 (NKQYHLRQLQQLKKKLLTLQQELEIRTQELQAS), 117–229 (EKLH…ACSN), 282–325 (LHVE…LREE), 355–680 (QKLS…SAIQ), 706–827 (QDDL…DEKE), and 879–916 (IAKLTGEKDHLHNVMAHLQQENKKLKNEIEEKKLKAGT).

As to expression, expressed in testis and more specifically in ODF, the sperm tail specific cytoskeletal structure. Also expressed in epididymides and brain.

Its subcellular location is the cell projection. The protein localises to the cilium. The protein resides in the flagellum. In terms of biological role, required for normal spermatogenesis. It functions as a scaffold protein that attaches the sperm head-tail connecting piece to the nuclear envelope, thus maintaining sperm head and tail integrity. May also be involved in the general organization of cellular cytoskeleton. The chain is Polyamine-modulated factor 1-binding protein 1 (Pmfbp1) from Rattus norvegicus (Rat).